The primary structure comprises 184 residues: UPF0397 protein SAR2767 (184 aa).

Transmembrane regions (helical) follow at residues Val11–Pro31, Ala44–Ile64, Ala77–Leu97, Gly117–Ile137, and Gln148–Leu168.

This sequence belongs to the UPF0397 family.

It localises to the cell membrane. This Staphylococcus aureus (strain MRSA252) protein is UPF0397 protein SAR2767.